Reading from the N-terminus, the 302-residue chain is Urease accessory protein UreD 1 (302 aa).

This sequence belongs to the UreD family. UreD, UreF and UreG form a complex that acts as a GTP-hydrolysis-dependent molecular chaperone, activating the urease apoprotein by helping to assemble the nickel containing metallocenter of UreC. The UreE protein probably delivers the nickel.

It is found in the cytoplasm. Functionally, required for maturation of urease via the functional incorporation of the urease nickel metallocenter. The sequence is that of Urease accessory protein UreD 1 from Psychrobacter cryohalolentis (strain ATCC BAA-1226 / DSM 17306 / VKM B-2378 / K5).